The sequence spans 143 residues: Deoxyuridine 5'-triphosphate nucleotidohydrolase (143 aa).

Belongs to the dUTPase family. Mg(2+) serves as cofactor.

The catalysed reaction is dUTP + H2O = dUMP + diphosphate + H(+). In terms of biological role, this enzyme is involved in nucleotide metabolism: it produces dUMP, the immediate precursor of thymidine nucleotides and it decreases the intracellular concentration of dUTP so that uracil cannot be incorporated into DNA. This is Deoxyuridine 5'-triphosphate nucleotidohydrolase (DUT) from Yaba monkey tumor virus (strain VR587) (YMTV).